A 207-amino-acid chain; its full sequence is Keratin-associated protein 27-1 (207 aa).

The disordered stretch occupies residues 184–207 (QLLESSPGVEPTCCVTGGSQLPSK).

This sequence belongs to the PMG family. In terms of assembly, interacts with hair keratins.

Functionally, in the hair cortex, hair keratin intermediate filaments are embedded in an interfilamentous matrix, consisting of hair keratin-associated proteins (KRTAP), which are essential for the formation of a rigid and resistant hair shaft through their extensive disulfide bond cross-linking with abundant cysteine residues of hair keratins. The matrix proteins include the high-sulfur and high-glycine-tyrosine keratins. This chain is Keratin-associated protein 27-1 (KRTAP27-1), found in Homo sapiens (Human).